We begin with the raw amino-acid sequence, 185 residues long: MIEEVKKNCEEKMKKTVVALKEEFNMLRTGRASSALFDKIRVNCYGESTPLNQLANISIPEARLVVIQPWDKGLLVEIEKAVLQADLSVNPTNDGKVIRIAIPPLTEDRRKDLAKKAKTIAENSRVSVRNIRRDGIDEAKKLQKDGKISEDQLKTAEDAFQKSTDAYIAEINKVLEAKEKEIMEN.

This sequence belongs to the RRF family.

The protein resides in the cytoplasm. In terms of biological role, responsible for the release of ribosomes from messenger RNA at the termination of protein biosynthesis. May increase the efficiency of translation by recycling ribosomes from one round of translation to another. The polypeptide is Ribosome-recycling factor (Treponema denticola (strain ATCC 35405 / DSM 14222 / CIP 103919 / JCM 8153 / KCTC 15104)).